We begin with the raw amino-acid sequence, 199 residues long: Insertion sequence IS21-like putative ATP-binding protein (199 aa).

114-121 (GDSGTGKT) contributes to the ATP binding site.

This sequence belongs to the IS21/IS1162 putative ATP-binding protein family.

This is Insertion sequence IS21-like putative ATP-binding protein (tnpB) from Bacteroides fragilis (strain YCH46).